The primary structure comprises 361 residues: Glutaminyl-peptide cyclotransferase (361 aa).

A signal peptide spans 1 to 28 (MAGGRHRRVVGTLHLLLLVAALPWASRG). The N-linked (GlcNAc...) asparagine glycan is linked to Asn-49. An intrachain disulfide couples Cys-139 to Cys-164. Residue Asp-159 coordinates Zn(2+). The Proton acceptor role is filled by Glu-201. Residue Glu-202 coordinates Zn(2+). The active-site Proton acceptor is Asp-248. A glycan (N-linked (GlcNAc...) asparagine) is linked at Asn-296. His-330 lines the Zn(2+) pocket.

The protein belongs to the glutaminyl-peptide cyclotransferase family.

The protein resides in the secreted. The catalysed reaction is N-terminal L-glutaminyl-[peptide] = N-terminal 5-oxo-L-prolyl-[peptide] + NH4(+). Functionally, responsible for the biosynthesis of pyroglutamyl peptides. Has a bias against acidic and tryptophan residues adjacent to the N-terminal glutaminyl residue and a lack of importance of chain length after the second residue. Also catalyzes N-terminal pyroglutamate formation. In vitro, catalyzes pyroglutamate formation of N-terminally truncated form of APP amyloid-beta peptides [Glu-3]-amyloid-beta. May be involved in the N-terminal pyroglutamate formation of several amyloid-related plaque-forming peptides. The sequence is that of Glutaminyl-peptide cyclotransferase (QPCT) from Homo sapiens (Human).